The chain runs to 361 residues: Spermidine/putrescine import ATP-binding protein PotA (361 aa).

The ABC transporter domain occupies 4–234 (LELRDVTRRF…PANRFIADFI (231 aa)). 36–43 (GPSGCGKT) contacts ATP.

This sequence belongs to the ABC transporter superfamily. Spermidine/putrescine importer (TC 3.A.1.11.1) family. As to quaternary structure, the complex is composed of two ATP-binding proteins (PotA), two transmembrane proteins (PotB and PotC) and a solute-binding protein (PotD).

The protein localises to the cell inner membrane. It catalyses the reaction ATP + H2O + polyamine-[polyamine-binding protein]Side 1 = ADP + phosphate + polyamineSide 2 + [polyamine-binding protein]Side 1.. In terms of biological role, part of the ABC transporter complex PotABCD involved in spermidine/putrescine import. Responsible for energy coupling to the transport system. This chain is Spermidine/putrescine import ATP-binding protein PotA, found in Nitrosomonas europaea (strain ATCC 19718 / CIP 103999 / KCTC 2705 / NBRC 14298).